The sequence spans 331 residues: Serine/threonine-protein phosphatase PP1 isozyme 7 (331 aa).

Methionine 1 carries the N-acetylmethionine modification. Aspartate 60, histidine 62, aspartate 88, and asparagine 120 together coordinate Mn(2+). Histidine 121 (proton donor) is an active-site residue. 2 residues coordinate Mn(2+): histidine 169 and histidine 244.

It belongs to the PPP phosphatase family. PP-1 subfamily. The cofactor is Mn(2+). Expressed in roots, rosettes and flowers.

The protein localises to the nucleus. Its subcellular location is the cytoplasm. It carries out the reaction O-phospho-L-seryl-[protein] + H2O = L-seryl-[protein] + phosphate. The enzyme catalyses O-phospho-L-threonyl-[protein] + H2O = L-threonyl-[protein] + phosphate. Phosphatase activity is strongly reduced by the protein phosphatase inhibitor 2 (I-2). Functionally, serine/threonine-protein phosphatase that possesses phosphatase activity toward para-nitrophenyl phosphate (pNPP) in vitro. In Arabidopsis thaliana (Mouse-ear cress), this protein is Serine/threonine-protein phosphatase PP1 isozyme 7.